A 36-amino-acid polypeptide reads, in one-letter code: Alpha-conotoxin-like Pu1.3 (36 aa).

Positions 1–21 (SDGRNAGADRKGFGLISQMFK) are excised as a propeptide. 2 cysteine pairs are disulfide-bonded: Cys-24/Cys-30 and Cys-25/Cys-36.

Belongs to the conotoxin A superfamily. As to expression, expressed by the venom duct.

Its subcellular location is the secreted. Functionally, alpha-conotoxins act on postsynaptic membranes, they bind to the nicotinic acetylcholine receptors (nAChR) and thus inhibit them. The protein is Alpha-conotoxin-like Pu1.3 of Conus pulicarius (Flea-bitten cone).